The primary structure comprises 192 residues: Protein GrpE (192 aa).

The disordered stretch occupies residues 1-43; sequence MQENKQPSEIQGELPQPPDGESVPPQPTNEQAPPDTDTMPRIE.

Belongs to the GrpE family. Homodimer.

The protein resides in the cytoplasm. Its function is as follows. Participates actively in the response to hyperosmotic and heat shock by preventing the aggregation of stress-denatured proteins, in association with DnaK and GrpE. It is the nucleotide exchange factor for DnaK and may function as a thermosensor. Unfolded proteins bind initially to DnaJ; upon interaction with the DnaJ-bound protein, DnaK hydrolyzes its bound ATP, resulting in the formation of a stable complex. GrpE releases ADP from DnaK; ATP binding to DnaK triggers the release of the substrate protein, thus completing the reaction cycle. Several rounds of ATP-dependent interactions between DnaJ, DnaK and GrpE are required for fully efficient folding. The sequence is that of Protein GrpE from Aromatoleum aromaticum (strain DSM 19018 / LMG 30748 / EbN1) (Azoarcus sp. (strain EbN1)).